Consider the following 373-residue polypeptide: 4-hydroxy-3-methylbut-2-en-1-yl diphosphate synthase (flavodoxin) (373 aa).

Positions 269, 272, 304, and 311 each coordinate [4Fe-4S] cluster.

It belongs to the IspG family. It depends on [4Fe-4S] cluster as a cofactor.

The enzyme catalyses (2E)-4-hydroxy-3-methylbut-2-enyl diphosphate + oxidized [flavodoxin] + H2O + 2 H(+) = 2-C-methyl-D-erythritol 2,4-cyclic diphosphate + reduced [flavodoxin]. Its pathway is isoprenoid biosynthesis; isopentenyl diphosphate biosynthesis via DXP pathway; isopentenyl diphosphate from 1-deoxy-D-xylulose 5-phosphate: step 5/6. Functionally, converts 2C-methyl-D-erythritol 2,4-cyclodiphosphate (ME-2,4cPP) into 1-hydroxy-2-methyl-2-(E)-butenyl 4-diphosphate. This Baumannia cicadellinicola subsp. Homalodisca coagulata protein is 4-hydroxy-3-methylbut-2-en-1-yl diphosphate synthase (flavodoxin).